The primary structure comprises 420 residues: MAPLPPRGLVPSLLWCLSLFLSLPGPVWLQPSPPPHPSPRAEPHPCHTCRALVDNFNKGLERTIRDNFGGGNTAWEEEKLSKYKDSETRLVEVLEGVCSRSDFECHRLLELSEELVENWWFHRQQEAPDLFQWLCSDSLKLCCPSGTFGPSCLPCPGGTERPCGGYGQCEGEGTRGGSGHCDCQAGYGGEACGQCGLGYFEAERNSSHLVCSACFGPCARCTGPEESHCLQCKKGWALHHLKCVDIDECGTEQATCGADQFCVNTEGSYECRDCAKACLGCMGAGPGRCKKCSRGYQQVGSKCLDVDECETVVCPGENEKCENTEGGYRCVCAEGYRQEDGICVKEQVPESAGFFAEMTEDEMVVLQQMFFGVIICALATLAAKGDLVFTAIFIGAVAAMTGYWLSERSDRVLEGFIKGR.

The N-terminal stretch at 1–29 is a signal peptide; it reads MAPLPPRGLVPSLLWCLSLFLSLPGPVWL. The Extracellular segment spans residues 30–362; the sequence is QPSPPPHPSP…GFFAEMTEDE (333 aa). Positions 46–49 match the CXXC motif; sequence CHTC. Cystine bridges form between Cys46-Cys49, Cys155-Cys169, Cys163-Cys181, and Cys183-Cys192. The EGF-like 1 domain occupies 153–193; sequence LPCPGGTERPCGGYGQCEGEGTRGGSGHCDCQAGYGGEACG. Asn205 carries an N-linked (GlcNAc...) asparagine glycan. FU repeat units follow at residues 208–255 and 268–315; these read HLVC…EQAT and SYEC…VVCP. Positions 278-281 match the CXXC motif; it reads CLGC. Cystine bridges form between Cys278–Cys281, Cys309–Cys321, Cys314–Cys330, and Cys332–Cys343. The EGF-like 2; calcium-binding domain maps to 305–342; the sequence is DVDECETVVCPGENEKCENTEGGYRCVCAEGYRQEDGI. Residues 363 to 383 form a helical membrane-spanning segment; that stretch reads MVVLQQMFFGVIICALATLAA. Position 384 (Lys384) is a topological domain, cytoplasmic. A helical transmembrane segment spans residues 385 to 405; it reads GDLVFTAIFIGAVAAMTGYWL. The Extracellular segment spans residues 406–420; that stretch reads SERSDRVLEGFIKGR.

It belongs to the CRELD family. Expressed in myoblast C2C12 cells (at protein level).

The protein resides in the membrane. The catalysed reaction is Catalyzes the rearrangement of -S-S- bonds in proteins.. Functionally, protein disulfide isomerase. Promotes the localization of acetylcholine receptors (AChRs) to the plasma membrane. In Mus musculus (Mouse), this protein is Protein disulfide isomerase Creld1 (Creld1).